Here is a 501-residue protein sequence, read N- to C-terminus: Ribose import ATP-binding protein RbsA (501 aa).

2 consecutive ABC transporter domains span residues 6 to 242 (LQLS…VGRK) and 253 to 495 (VHGQ…VGKK). 38–45 (GENGAGKS) serves as a coordination point for ATP.

The protein belongs to the ABC transporter superfamily. Ribose importer (TC 3.A.1.2.1) family. The complex is composed of an ATP-binding protein (RbsA), two transmembrane proteins (RbsC) and a solute-binding protein (RbsB).

The protein localises to the cell inner membrane. It carries out the reaction D-ribose(out) + ATP + H2O = D-ribose(in) + ADP + phosphate + H(+). Part of the ABC transporter complex RbsABC involved in ribose import. Responsible for energy coupling to the transport system. The polypeptide is Ribose import ATP-binding protein RbsA (Vibrio vulnificus (strain YJ016)).